We begin with the raw amino-acid sequence, 513 residues long: Cytochrome P450 monooxygenase ARMGADRAFT_1018418 (513 aa).

The helical transmembrane segment at 1–21 threads the bilayer; the sequence is MTHASSAWFLAAVVIVTFIVV. Cys-435 lines the heme pocket. Residue Asn-442 is glycosylated (N-linked (GlcNAc...) asparagine).

The protein belongs to the cytochrome P450 family. Heme serves as cofactor.

The protein resides in the membrane. It participates in secondary metabolite biosynthesis. Cytochrome P450 monooxygenase, part of the gene cluster that mediates the biosynthesis of melleolides, a range of antifungal and phytotoxic polyketide derivatives composed of an orsellinic acid (OA) moiety esterified to various sesquiterpene alcohols. The first step in melleolides biosynthesis is performed by the delta(6)-protoilludene synthase PRO1 which catalyzes the cyclization of farnesyl diphosphate to protoilludene. The orsellinic acid synthase armB produces OA by condensing acetyl-CoA with 3 malonyl-CoA units in a three-round chain elongation reaction folowed by a C2-C7 ring closure. ArmB further catalyzes the trans-esterification of OA to the various sesquiterpene alcohols resulting from the hydroxylation of protoilludene. The melleolides cluster also includes 5 cytochrome P450 monooxygenases, 4 NAD(+)-dependent oxidoreductases, one flavin-dependent oxidoreductase, and one O-methyltransferase. The cytochrome P450 monooxygenases may be involved in protoilludene hydroxylation to elaborate melleolides with multiple alcohol groups, such as melleolide D, which carries alcohol functionalities at C-4, C-5, C-10, and C-13. The role of the NAD(+)-dependent enzymes remains unknown. Numerous melleolides, including arnamial, show 5'-O-methylation of the aromatic moiety which may be catalyzed by the methyltransferase encoded in the cluster. The flavin-dependent oxidoreductase might represent the dehydrogenase yielding the aldehyde in position 1 of arnamial and other melleolides. Finally, several halogenase localized outside of the cluster, are able to catalyze the transfer of a single chlorine atom to the melleolide backbone, resulting in a 6'-chloromelleolide product. This chain is Cytochrome P450 monooxygenase ARMGADRAFT_1018418, found in Armillaria gallica (Bulbous honey fungus).